The primary structure comprises 278 residues: Pantothenate synthetase (278 aa).

26–33 contributes to the ATP binding site; the sequence is MGNLHEGH. The active-site Proton donor is the histidine 33. Glutamine 57 is a binding site for (R)-pantoate. Beta-alanine is bound at residue glutamine 57. Residue 144–147 coordinates ATP; it reads GKKD. Glutamine 150 is a (R)-pantoate binding site. ATP is bound by residues glycine 173 and 181-184; that span reads LSSR.

This sequence belongs to the pantothenate synthetase family. Homodimer.

The protein resides in the cytoplasm. The enzyme catalyses (R)-pantoate + beta-alanine + ATP = (R)-pantothenate + AMP + diphosphate + H(+). The protein operates within cofactor biosynthesis; (R)-pantothenate biosynthesis; (R)-pantothenate from (R)-pantoate and beta-alanine: step 1/1. Functionally, catalyzes the condensation of pantoate with beta-alanine in an ATP-dependent reaction via a pantoyl-adenylate intermediate. The protein is Pantothenate synthetase of Neisseria meningitidis serogroup C / serotype 2a (strain ATCC 700532 / DSM 15464 / FAM18).